Consider the following 1007-residue polypeptide: Protein vav-1 (1007 aa).

The Calponin-homology (CH) domain occupies 37–151; the sequence is CDLWIGCARW…TLSFLSHTKE (115 aa). Positions 151–239 are AC; sequence ESLSRGVDPF…ENDLQNTPTL (89 aa). The disordered stretch occupies residues 153 to 176; sequence LSRGVDPFPDTDNNQEGTSNGSEF. Residues 163–174 show a composition bias toward polar residues; sequence TDNNQEGTSNGS. Tyr-183, Tyr-200, and Tyr-217 each carry phosphotyrosine. The DH domain maps to 240 to 437; that stretch reads KRNRCIRELY…EDVCNYINEE (198 aa). Residues 470–598 form the PH domain; it reads RVNLDGEVKM…WMTALLLSKS (129 aa). Residues 610–664 form a Phorbol-ester/DAG-type zinc finger; it reads NHKVAFHSFRVDVKNPATCDVCDKLMKGLQYQGYKCESCNMSMHKECLGLKKCEA. One can recognise an SH3 1 domain in the interval 688-750; the sequence is HEGDIVVANS…HLDHVSQSRT (63 aa). Positions 778–817 are disordered; sequence LPNKLLSDGSSRSLSGPHGSRSSRNSSSSTINGSMDSVPR. Residues 782–814 show a composition bias toward low complexity; that stretch reads LLSDGSSRSLSGPHGSRSSRNSSSSTINGSMDS. The SH2 domain occupies 831–925; it reads WYMGEMERAK…ALDTCLKNPY (95 aa). The SH3 2 domain occupies 926-991; that stretch reads SQCKVFKAVH…PLSYVKPYDP (66 aa).

GEF activity is regulated by phosphorylation on tyrosine residues. Strong expression in the pharynx, proximal gonad, spermatheca, intestine and rectal epithelia.

In terms of biological role, acts as a guanine nucleotide exchange factor (GEF) for Rho GTPase. Has a critical roles in the generation of rhythmic behaviors: feeding, defecation and ovulation by dynamically regulating the concentration of intracellular calcium. Plays a role in male tail tip morphogenesis. The chain is Protein vav-1 from Caenorhabditis elegans.